We begin with the raw amino-acid sequence, 557 residues long: uncharacterized protein (557 aa).

Residues 2–45 adopt a coiled-coil conformation; that stretch reads NEDETSILNKKMEKIEVEMAEFERLGAEREKEAVERIVQEENQN. Disordered stretches follow at residues 39–62, 101–127, 356–402, and 536–557; these read VQEE…KSRK, NRTY…RKNF, PSPS…YPSN, and ANAT…YDHI. Composition is skewed to polar residues over residues 101-110, 358-380, 390-400, and 536-548; these read NRTYYKNSQG, PSFQ…SSNA, DSATYPTSIYP, and ANAT…NLDT.

It localises to the cytoplasm. The protein localises to the nucleus. This is an uncharacterized protein from Schizosaccharomyces pombe (strain 972 / ATCC 24843) (Fission yeast).